A 198-amino-acid polypeptide reads, in one-letter code: Glycerol-3-phosphate acyltransferase 1 (198 aa).

Helical transmembrane passes span 5–25, 52–72, 81–101, 111–131, and 138–158; these read ALLALLLSYLIGAIPAAAWLA, GPALLVASFDILKGVLAVLLA, WAALCGVLAVIGHNFSPFLAF, FGVIAILDPVLGLTTFVLAIA, and FVSAGSIMGAFIAGALVLVLP.

It belongs to the PlsY family. As to quaternary structure, probably interacts with PlsX.

The protein resides in the cell membrane. It catalyses the reaction an acyl phosphate + sn-glycerol 3-phosphate = a 1-acyl-sn-glycero-3-phosphate + phosphate. The protein operates within lipid metabolism; phospholipid metabolism. In terms of biological role, catalyzes the transfer of an acyl group from acyl-phosphate (acyl-PO(4)) to glycerol-3-phosphate (G3P) to form lysophosphatidic acid (LPA). This enzyme utilizes acyl-phosphate as fatty acyl donor, but not acyl-CoA or acyl-ACP. The protein is Glycerol-3-phosphate acyltransferase 1 of Deinococcus radiodurans (strain ATCC 13939 / DSM 20539 / JCM 16871 / CCUG 27074 / LMG 4051 / NBRC 15346 / NCIMB 9279 / VKM B-1422 / R1).